The chain runs to 288 residues: N-acetylneuraminate lyase (288 aa).

The aceneuramate site is built by Ser-44 and Thr-45. Residue Tyr-133 is the Proton donor of the active site. Residue Lys-161 is the Schiff-base intermediate with substrate of the active site. Aceneuramate-binding residues include Thr-163, Gly-185, Asp-187, Glu-188, and Ser-204.

It belongs to the DapA family. NanA subfamily. As to quaternary structure, homotetramer.

It localises to the cytoplasm. The enzyme catalyses aceneuramate = aldehydo-N-acetyl-D-mannosamine + pyruvate. It participates in amino-sugar metabolism; N-acetylneuraminate degradation; D-fructose 6-phosphate from N-acetylneuraminate: step 1/5. In terms of biological role, catalyzes the reversible aldol cleavage of N-acetylneuraminic acid (sialic acid; Neu5Ac) to form pyruvate and N-acetylmannosamine (ManNAc) via a Schiff base intermediate. In Clostridium perfringens (strain SM101 / Type A), this protein is N-acetylneuraminate lyase.